The following is a 388-amino-acid chain: Flap endonuclease 1 (388 aa).

The N-domain stretch occupies residues 1–104; sequence MGILGLSKLI…GELAKRAERR (104 aa). D34 is a binding site for Mg(2+). 2 residues coordinate DNA: R47 and R70. Mg(2+) is bound by residues D86, E158, E160, D179, and D181. An I-domain region spans residues 122–253; that stretch reads EIEKFNRRLV…KRAIELIKTY (132 aa). E158 is a DNA binding site. Positions 231 and 233 each coordinate DNA. Position 233 (D233) interacts with Mg(2+). Residues 336–344 form an interaction with PCNA region; the sequence is TQVRLDSFF. The interval 351–388 is disordered; that stretch reads PNATAAAKRKAEEIKKSANNKKAKTSGGSGAARGRRPK.

This sequence belongs to the XPG/RAD2 endonuclease family. FEN1 subfamily. As to quaternary structure, interacts with PCNA. Three molecules of FEN1 bind to one PCNA trimer with each molecule binding to one PCNA monomer. PCNA stimulates the nuclease activity without altering cleavage specificity. Mg(2+) serves as cofactor. In terms of processing, phosphorylated. Phosphorylation upon DNA damage induces relocalization to the nuclear plasma.

The protein resides in the nucleus. The protein localises to the nucleolus. It is found in the nucleoplasm. It localises to the mitochondrion. Structure-specific nuclease with 5'-flap endonuclease and 5'-3' exonuclease activities involved in DNA replication and repair. During DNA replication, cleaves the 5'-overhanging flap structure that is generated by displacement synthesis when DNA polymerase encounters the 5'-end of a downstream Okazaki fragment. It enters the flap from the 5'-end and then tracks to cleave the flap base, leaving a nick for ligation. Also involved in the long patch base excision repair (LP-BER) pathway, by cleaving within the apurinic/apyrimidinic (AP) site-terminated flap. Acts as a genome stabilization factor that prevents flaps from equilibrating into structures that lead to duplications and deletions. Also possesses 5'-3' exonuclease activity on nicked or gapped double-stranded DNA, and exhibits RNase H activity. Also involved in replication and repair of rDNA and in repairing mitochondrial DNA. This Drosophila mojavensis (Fruit fly) protein is Flap endonuclease 1.